We begin with the raw amino-acid sequence, 868 residues long: Leucine--tRNA ligase (868 aa).

Residues 42–52 (PYPSGKLHMGH) carry the 'HIGH' region motif. The 'KMSKS' region signature appears at 627–631 (KMSKS). K630 provides a ligand contact to ATP.

The protein belongs to the class-I aminoacyl-tRNA synthetase family.

It is found in the cytoplasm. It catalyses the reaction tRNA(Leu) + L-leucine + ATP = L-leucyl-tRNA(Leu) + AMP + diphosphate. The polypeptide is Leucine--tRNA ligase (Pseudomonas putida (strain ATCC 47054 / DSM 6125 / CFBP 8728 / NCIMB 11950 / KT2440)).